The following is a 122-amino-acid chain: Large ribosomal subunit protein bL19 (122 aa).

It belongs to the bacterial ribosomal protein bL19 family.

Its function is as follows. This protein is located at the 30S-50S ribosomal subunit interface and may play a role in the structure and function of the aminoacyl-tRNA binding site. The polypeptide is Large ribosomal subunit protein bL19 (Chlamydia felis (strain Fe/C-56) (Chlamydophila felis)).